We begin with the raw amino-acid sequence, 212 residues long: MFTIALPKGALLKDSISTFKRAGLDFSDALEKNNRSLTFESNCKRAKALLVRNGDVPVYVSYGQADLGIVGYDVLRESELKVAKLLDLGFGGCHMSLAVKKNSNYLKPTDLPANCKVASKFIKTARFYFEELNIPVEIVHLTGSVELGPITGMAEAIVDLVATGKTLKENGLIKIDDLFYSTARLIGNPLSMRLDDNHLRDTILSIESTNDT.

It belongs to the ATP phosphoribosyltransferase family. Short subfamily. In terms of assembly, heteromultimer composed of HisG and HisZ subunits.

The protein resides in the cytoplasm. It carries out the reaction 1-(5-phospho-beta-D-ribosyl)-ATP + diphosphate = 5-phospho-alpha-D-ribose 1-diphosphate + ATP. The protein operates within amino-acid biosynthesis; L-histidine biosynthesis; L-histidine from 5-phospho-alpha-D-ribose 1-diphosphate: step 1/9. Its function is as follows. Catalyzes the condensation of ATP and 5-phosphoribose 1-diphosphate to form N'-(5'-phosphoribosyl)-ATP (PR-ATP). Has a crucial role in the pathway because the rate of histidine biosynthesis seems to be controlled primarily by regulation of HisG enzymatic activity. This Prochlorococcus marinus (strain MIT 9301) protein is ATP phosphoribosyltransferase.